Reading from the N-terminus, the 90-residue chain is Small ribosomal subunit protein uS19 (90 aa).

It belongs to the universal ribosomal protein uS19 family.

Functionally, protein S19 forms a complex with S13 that binds strongly to the 16S ribosomal RNA. This is Small ribosomal subunit protein uS19 from Rhizorhabdus wittichii (strain DSM 6014 / CCUG 31198 / JCM 15750 / NBRC 105917 / EY 4224 / RW1) (Sphingomonas wittichii).